We begin with the raw amino-acid sequence, 760 residues long: Dipeptidyl peptidase 4 (760 aa).

The Cytoplasmic segment spans residues 1–6 (MKTPWK). A helical; Signal-anchor for type II membrane protein transmembrane segment spans residues 7 to 28 (VLLGLLGVAALVTIITVPIVLL). Topologically, residues 29-760 (SKDEAAADSR…HFLQQCFSLH (732 aa)) are extracellular. 7 N-linked (GlcNAc...) asparagine glycosylation sites follow: asparagine 83, asparagine 90, asparagine 144, asparagine 213, asparagine 223, asparagine 315, and asparagine 328. 4 disulfides stabilise this stretch: cysteine 322–cysteine 333, cysteine 379–cysteine 388, cysteine 438–cysteine 441, and cysteine 448–cysteine 466. N-linked (GlcNAc...) asparagine glycosylation is present at asparagine 514. The Charge relay system role is filled by serine 624. The cysteines at positions 643 and 756 are disulfide-linked. Asparagine 679 carries N-linked (GlcNAc...) asparagine glycosylation. Active-site charge relay system residues include aspartate 702 and histidine 734.

This sequence belongs to the peptidase S9B family. DPPIV subfamily. As to quaternary structure, monomer. Homodimer. Heterodimer with Seprase (FAP). Requires homodimerization for optimal dipeptidyl peptidase activity and T-cell costimulation. Found in a membrane raft complex, at least composed of BCL10, CARD11, DPP4 and IKBKB. Associates with collagen. Interacts with PTPRC; the interaction is enhanced in an interleukin-12-dependent manner in activated lymphocytes. Interacts (via extracellular domain) with ADA; does not inhibit its dipeptidyl peptidase activity. Interacts with CAV1 (via the N-terminus); the interaction is direct. Interacts (via cytoplasmic tail) with CARD11 (via PDZ domain); its homodimerization is necessary for interaction with CARD11. Interacts with IGF2R; the interaction is direct. Interacts with GPC3. In terms of processing, the soluble form (Dipeptidyl peptidase 4 soluble form also named SDPP) derives from the membrane form (Dipeptidyl peptidase 4 membrane form also named MDPP) by proteolytic processing. N- and O-Glycosylated. Post-translationally, phosphorylated. Mannose 6-phosphate residues in the carbohydrate moiety are necessary for interaction with IGF2R in activated T-cells. Mannose 6-phosphorylation is induced during T-cell activation.

It localises to the secreted. It is found in the cell membrane. The protein localises to the apical cell membrane. Its subcellular location is the cell projection. The protein resides in the invadopodium membrane. It localises to the lamellipodium membrane. It is found in the cell junction. The protein localises to the membrane raft. The enzyme catalyses Release of an N-terminal dipeptide, Xaa-Yaa-|-Zaa-, from a polypeptide, preferentially when Yaa is Pro, provided Zaa is neither Pro nor hydroxyproline.. With respect to regulation, inhibited by GPC3 and diprotin A. Cell surface glycoprotein receptor involved in the costimulatory signal essential for T-cell receptor (TCR)-mediated T-cell activation. Acts as a positive regulator of T-cell coactivation, by binding at least ADA, CAV1, IGF2R, and PTPRC. Its binding to CAV1 and CARD11 induces T-cell proliferation and NF-kappa-B activation in a T-cell receptor/CD3-dependent manner. Its interaction with ADA also regulates lymphocyte-epithelial cell adhesion. In association with FAP is involved in the pericellular proteolysis of the extracellular matrix (ECM), the migration and invasion of endothelial cells into the ECM. May be involved in the promotion of lymphatic endothelial cells adhesion, migration and tube formation. When overexpressed, enhanced cell proliferation, a process inhibited by GPC3. Also acts as a serine exopeptidase with a dipeptidyl peptidase activity that regulates various physiological processes by cleaving peptides in the circulation, including many chemokines, mitogenic growth factors, neuropeptides and peptide hormones. Removes N-terminal dipeptides sequentially from polypeptides having unsubstituted N-termini provided that the penultimate residue is proline. This chain is Dipeptidyl peptidase 4 (Dpp4), found in Mus musculus (Mouse).